Consider the following 141-residue polypeptide: Hemoglobin subunit alpha-A (141 aa).

A Globin domain is found at 1-141 (VLSSHDKSNV…VGTVLTAKYR (141 aa)). An O2-binding site is contributed by histidine 58. Histidine 87 lines the heme b pocket.

It belongs to the globin family. Heterotetramer of two alpha chains and two beta chains. Red blood cells.

In terms of biological role, involved in oxygen transport from the lung to the various peripheral tissues. The protein is Hemoglobin subunit alpha-A (HBAA) of Phoenicopterus ruber (American flamingo).